Consider the following 141-residue polypeptide: Sec-independent protein translocase protein TatB (141 aa).

A helical transmembrane segment spans residues 2-22; that stretch reads FANVGWGEMLVLVIAGLVILG. The interval 92–141 is disordered; the sequence is IFTGRFDSTSSDQPGSGKPPKPQSGPGPAAASGPAATTTPASTPFDPDAT. Residues 117–141 show a composition bias toward low complexity; the sequence is PGPAAASGPAATTTPASTPFDPDAT.

The protein belongs to the TatB family. In terms of assembly, the Tat system comprises two distinct complexes: a TatABC complex, containing multiple copies of TatA, TatB and TatC subunits, and a separate TatA complex, containing only TatA subunits. Substrates initially bind to the TatABC complex, which probably triggers association of the separate TatA complex to form the active translocon.

Its subcellular location is the cell membrane. Its function is as follows. Part of the twin-arginine translocation (Tat) system that transports large folded proteins containing a characteristic twin-arginine motif in their signal peptide across membranes. Together with TatC, TatB is part of a receptor directly interacting with Tat signal peptides. TatB may form an oligomeric binding site that transiently accommodates folded Tat precursor proteins before their translocation. The sequence is that of Sec-independent protein translocase protein TatB from Mycolicibacterium gilvum (strain PYR-GCK) (Mycobacterium gilvum (strain PYR-GCK)).